The following is a 197-amino-acid chain: Small ribosomal subunit protein uS4 (197 aa).

An S4 RNA-binding domain is found at Leu-87–Lys-147.

Belongs to the universal ribosomal protein uS4 family. As to quaternary structure, part of the 30S ribosomal subunit. Contacts protein S5. The interaction surface between S4 and S5 is involved in control of translational fidelity.

In terms of biological role, one of the primary rRNA binding proteins, it binds directly to 16S rRNA where it nucleates assembly of the body of the 30S subunit. Its function is as follows. With S5 and S12 plays an important role in translational accuracy. This Lachnospira eligens (strain ATCC 27750 / DSM 3376 / VPI C15-48 / C15-B4) (Eubacterium eligens) protein is Small ribosomal subunit protein uS4.